A 613-amino-acid chain; its full sequence is Phostensin (613 aa).

A compositionally biased stretch (basic and acidic residues) spans 15 to 33 (RRQEEASVRGREKAERERL). Disordered stretches follow at residues 15–231 (RRQE…SAYQ) and 266–505 (GEER…GKKR). Residues Ser54, Ser125, Ser133, Ser175, and Ser195 each carry the phosphoserine modification. 2 stretches are compositionally biased toward basic and acidic residues: residues 104–154 (RSEE…ERRL) and 167–191 (LEAR…EPWK). Thr199 carries the phosphothreonine modification. The segment covering 199–221 (TPERSLRLAESREQSPRRKEVES) has biased composition (basic and acidic residues). At Ser224 the chain carries Phosphoserine. The segment covering 266–282 (GEERQGYSEKCGRKEEW) has biased composition (basic and acidic residues). Residues 301 to 310 (REAQGSSSTG) show a composition bias toward polar residues. 3 stretches are compositionally biased toward basic and acidic residues: residues 314 to 327 (AEQR…RGMK), 340 to 350 (KAREWTPRDIE), and 357 to 367 (EPSESAEKRLE). 2 positions are modified to phosphoserine: Ser368 and Ser432. Positions 424-446 (QPPPPAPLSPPPPAPTAPQPPGD) are enriched in pro residues. N6-acetyllysine is present on Lys457. Positions 476–499 (PRRSVPPTTPATPTSPATADAAVP) are enriched in low complexity. A phosphoserine mark is found at Ser490 and Ser530. Positions 552-594 (QYPSESSVLEELGPEPEVPSAPNPPAAQPDDEEDEEELLLLQP) are disordered. A compositionally biased stretch (pro residues) spans 567-578 (PEVPSAPNPPAA). Residues 580–589 (PDDEEDEEEL) show a composition bias toward acidic residues.

Interacts with Protein phosphatase 1 (PP1).

The protein localises to the cytoplasm. The protein resides in the cytoskeleton. Functionally, may target protein phosphatase 1 to F-actin cytoskeleton. The polypeptide is Phostensin (PPP1R18) (Macaca mulatta (Rhesus macaque)).